The primary structure comprises 179 residues: Large ribosomal subunit protein uL6 (179 aa).

The protein belongs to the universal ribosomal protein uL6 family. Part of the 50S ribosomal subunit.

Its function is as follows. This protein binds to the 23S rRNA, and is important in its secondary structure. It is located near the subunit interface in the base of the L7/L12 stalk, and near the tRNA binding site of the peptidyltransferase center. This is Large ribosomal subunit protein uL6 from Akkermansia muciniphila (strain ATCC BAA-835 / DSM 22959 / JCM 33894 / BCRC 81048 / CCUG 64013 / CIP 107961 / Muc).